The sequence spans 268 residues: LOB domain-containing protein 22 (268 aa).

A disordered region spans residues 1–31; it reads MPSGKPSSVFPLHPKPTPLKPSSSTSSSNNN. Low complexity predominate over residues 22-31; that stretch reads SSSTSSSNNN. Residues 35–136 enclose the LOB domain; it reads QACAACKYQR…NELEIVLQQL (102 aa).

The protein belongs to the LOB domain-containing protein family.

The chain is LOB domain-containing protein 22 (LBD22) from Arabidopsis thaliana (Mouse-ear cress).